Reading from the N-terminus, the 451-residue chain is Tubulin alpha chain (451 aa).

Residue glutamine 11 participates in GTP binding. Residue lysine 40 is modified to N6-acetyllysine. GTP is bound by residues glutamate 71, serine 140, glycine 144, threonine 145, threonine 179, asparagine 206, and asparagine 228. Glutamate 71 serves as a coordination point for Mg(2+). Glutamate 254 is a catalytic residue.

Belongs to the tubulin family. In terms of assembly, dimer of alpha and beta chains. A typical microtubule is a hollow water-filled tube with an outer diameter of 25 nm and an inner diameter of 15 nM. Alpha-beta heterodimers associate head-to-tail to form protofilaments running lengthwise along the microtubule wall with the beta-tubulin subunit facing the microtubule plus end conferring a structural polarity. Microtubules usually have 13 protofilaments but different protofilament numbers can be found in some organisms and specialized cells. The cofactor is Mg(2+). Undergoes a tyrosination/detyrosination cycle, the cyclic removal and re-addition of a C-terminal tyrosine residue by the enzymes tubulin tyrosine carboxypeptidase (TTCP) and tubulin tyrosine ligase (TTL), respectively. Post-translationally, acetylation of alpha chains at Lys-40 stabilizes microtubules and affects affinity and processivity of microtubule motors. This modification has a role in multiple cellular functions, ranging from cell motility, cell cycle progression or cell differentiation to intracellular trafficking and signaling. In terms of tissue distribution, actively expressed in the lens but does not seem to be lens-specific.

It is found in the cytoplasm. It localises to the cytoskeleton. It catalyses the reaction GTP + H2O = GDP + phosphate + H(+). Functionally, tubulin is the major constituent of microtubules, a cylinder consisting of laterally associated linear protofilaments composed of alpha- and beta-tubulin heterodimers. Microtubules grow by the addition of GTP-tubulin dimers to the microtubule end, where a stabilizing cap forms. Below the cap, tubulin dimers are in GDP-bound state, owing to GTPase activity of alpha-tubulin. The chain is Tubulin alpha chain from Enteroctopus dofleini (North Pacific giant octopus).